Reading from the N-terminus, the 440-residue chain is MAQFFKPQKKSTQPQRIEFTVDSLDHHCVGIGRHQGKAIFIEGALPGELVKARILEDKKQYAHAALQQVVTPAANRIAPFCSHYRECGGCSAQHLAEADQRAAKEAGLVSLFERLGNIQPPALEPVLGGESRAYRRVCRLAIKFDKNGRCTRVGFRRRQSNDLVEIGGCPVLAEPLSVLITPLRECLNRLKSQRELGHVELIQAEQGILMLLRHTGRPTEADRAQLIEFAKTQGIDLYLQAADEQIEPLHQQFAPSYSLDGLSLAFAPGDFIQVNAPVNQRMVEQALSWLEAGKDDKVLDLFCGIGNFTLPLARQAREVVGVEGELAMVARAEENARRNGINNARFYKADLGGDIAGMSWAREGFDLVLLDPARPGAFEVMEHVVKLSPRRVVYVSCNPVTLARDSQVLVKGGYRLVRLGMLDMFPHTGHLESMALFERK.

In terms of domain architecture, TRAM spans 10-68 (KSTQPQRIEFTVDSLDHHCVGIGRHQGKAIFIEGALPGELVKARILEDKKQYAHAALQQ). Cys-81, Cys-87, Cys-90, and Cys-169 together coordinate [4Fe-4S] cluster. Residues Gln-273, Phe-302, Asn-307, Glu-323, Asp-350, and Asp-371 each coordinate S-adenosyl-L-methionine. The Nucleophile role is filled by Cys-397.

The protein belongs to the class I-like SAM-binding methyltransferase superfamily. RNA M5U methyltransferase family. RlmD subfamily.

It carries out the reaction uridine(1939) in 23S rRNA + S-adenosyl-L-methionine = 5-methyluridine(1939) in 23S rRNA + S-adenosyl-L-homocysteine + H(+). Its function is as follows. Catalyzes the formation of 5-methyl-uridine at position 1939 (m5U1939) in 23S rRNA. This chain is 23S rRNA (uracil(1939)-C(5))-methyltransferase RlmD, found in Aeromonas hydrophila subsp. hydrophila (strain ATCC 7966 / DSM 30187 / BCRC 13018 / CCUG 14551 / JCM 1027 / KCTC 2358 / NCIMB 9240 / NCTC 8049).